Reading from the N-terminus, the 723-residue chain is Catalase-peroxidase (723 aa).

Residues 96 to 224 (WHAAGTYRIQ…LAAVQMGLIY (129 aa)) constitute a cross-link (tryptophyl-tyrosyl-methioninium (Trp-Tyr) (with M-250)). H97 serves as the catalytic Proton acceptor. The tryptophyl-tyrosyl-methioninium (Tyr-Met) (with W-96) cross-link spans 224–250 (YVNPEGVNSQPDPIKTGEQVRVTFARM). Heme b is bound at residue H265.

Belongs to the peroxidase family. Peroxidase/catalase subfamily. As to quaternary structure, homodimer or homotetramer. Requires heme b as cofactor. Formation of the three residue Trp-Tyr-Met cross-link is important for the catalase, but not the peroxidase activity of the enzyme.

It carries out the reaction H2O2 + AH2 = A + 2 H2O. It catalyses the reaction 2 H2O2 = O2 + 2 H2O. Bifunctional enzyme with both catalase and broad-spectrum peroxidase activity. This chain is Catalase-peroxidase, found in Marinobacter nauticus (strain ATCC 700491 / DSM 11845 / VT8) (Marinobacter aquaeolei).